The sequence spans 311 residues: Pseudouridine-5'-phosphate glycosidase (311 aa).

The active-site Proton donor is Glu-32. Substrate contacts are provided by Lys-96 and Val-116. Asp-148 is a binding site for Mn(2+). Substrate is bound at residue 150–152; it reads SAD. The active-site Nucleophile is Lys-169.

The protein belongs to the pseudouridine-5'-phosphate glycosidase family. In terms of assembly, homotrimer. Mn(2+) is required as a cofactor.

The enzyme catalyses D-ribose 5-phosphate + uracil = psi-UMP + H2O. Its function is as follows. Catalyzes the reversible cleavage of pseudouridine 5'-phosphate (PsiMP) to ribose 5-phosphate and uracil. Functions biologically in the cleavage direction, as part of a pseudouridine degradation pathway. The chain is Pseudouridine-5'-phosphate glycosidase from Roseiflexus sp. (strain RS-1).